A 405-amino-acid polypeptide reads, in one-letter code: Aspartokinase (405 aa).

2 ACT domains span residues 267–344 and 345–405; these read VSME…AKVS and IVGV…QLDQ.

Belongs to the aspartokinase family.

The catalysed reaction is L-aspartate + ATP = 4-phospho-L-aspartate + ADP. The protein operates within amino-acid biosynthesis; L-lysine biosynthesis via DAP pathway; (S)-tetrahydrodipicolinate from L-aspartate: step 1/4. It functions in the pathway amino-acid biosynthesis; L-methionine biosynthesis via de novo pathway; L-homoserine from L-aspartate: step 1/3. Its pathway is amino-acid biosynthesis; L-threonine biosynthesis; L-threonine from L-aspartate: step 1/5. The chain is Aspartokinase (lysC) from Helicobacter pylori (strain ATCC 700392 / 26695) (Campylobacter pylori).